Reading from the N-terminus, the 229-residue chain is MPFKKINIAIDGPSGVGKSTIAKQIANKFNYLFINTGSLYRAIAFFCQKNQISITSERKMIKHLPPNFLSLDFEGNVWLQNQNVSNLLRNDLISKNAAIIAQYPQIRKIVTEILQNFQKNHKGIIMEGRDTTYNVMPDADLKIFLWADAETRAKRRLKQNTFLNLETDFQEILKAIEHRDYLDMTRKTNPLKKTVDSIFLDTTNFTRDQIVSQISKLVFRKIGQFSLEI.

Residue 12 to 20 coordinates ATP; that stretch reads GPSGVGKST.

This sequence belongs to the cytidylate kinase family. Type 1 subfamily.

The protein resides in the cytoplasm. The catalysed reaction is CMP + ATP = CDP + ADP. It carries out the reaction dCMP + ATP = dCDP + ADP. In Mesomycoplasma hyopneumoniae (strain 7448) (Mycoplasma hyopneumoniae), this protein is Cytidylate kinase.